Reading from the N-terminus, the 324-residue chain is Galactosylgalactosylxylosylprotein 3-beta-glucuronosyltransferase 2 (324 aa).

Topologically, residues 1–2 (MK) are cytoplasmic. A helical; Signal-anchor for type II membrane protein membrane pass occupies residues 3 to 23 (SALCNRFFILLPWILIVIIML). Topologically, residues 24-324 (DVDPRRPAPQ…YHMDTVNIEV (301 aa)) are lumenal. The segment at 34–78 (LTSRPYFSPHTVGCGGSRVPLRRSSPGRDAAEKRNESRPQLQPEP) is disordered. N-linked (GlcNAc...) asparagine glycosylation occurs at Asn68. Mn(2+) is bound at residue Asp188. The active-site Proton acceptor is Glu274. A glycan (N-linked (GlcNAc...) asparagine) is linked at Asn293.

This sequence belongs to the glycosyltransferase 43 family. Homodimer. Mn(2+) is required as a cofactor. In terms of tissue distribution, expressed in the cerebral cortex, cerebellum and whole brain.

It is found in the golgi apparatus membrane. The catalysed reaction is 3-O-(beta-D-galactosyl-(1-&gt;3)-beta-D-galactosyl-(1-&gt;4)-beta-D-xylosyl)-L-seryl-[protein] + UDP-alpha-D-glucuronate = 3-O-(beta-D-GlcA-(1-&gt;3)-beta-D-Gal-(1-&gt;3)-beta-D-Gal-(1-&gt;4)-beta-D-Xyl)-L-seryl-[protein] + UDP + H(+). It participates in protein modification; protein glycosylation. Its function is as follows. Involved in the biosynthesis of L2/HNK-1 carbohydrate epitope on both glycolipids and glycoproteins. Substrates include asialo-orosomucoid (ASOR), paragloboside (lacto-N-neotetraosylceramide), Gal-beta-1,4-GlcNAc-beta-1,3-Gal-beta-1,4-Glc-pyridylamine and Gal-beta-1,3-GlcNAc-beta-1,3-Gal-beta-1,4-Glc-pyridylamine. This chain is Galactosylgalactosylxylosylprotein 3-beta-glucuronosyltransferase 2 (B3gat2), found in Rattus norvegicus (Rat).